The primary structure comprises 606 residues: NADH-ubiquinone oxidoreductase chain 5 (606 aa).

16 helical membrane-spanning segments follow: residues 1–21, 38–58, 87–107, 114–134, 140–160, 171–191, 213–233, 241–261, 273–293, 301–320, 325–347, 366–386, 409–429, 457–477, 488–508, and 582–602; these read MNIF…PIIA, NIIS…IYSG, MIFV…SIWY, ITQF…LVTA, LFIG…WWYG, AILY…WFLS, LMGL…HPWL, TPVS…FLLI, AQTL…ICAL, IIAF…IGIN, AFLH…GSII, MPFT…MPFL, LLMT…MIFF, LLIG…PTTT, LMAL…SLAT, and GLIK…LLLL.

Belongs to the complex I subunit 5 family. As to quaternary structure, core subunit of respiratory chain NADH dehydrogenase (Complex I) which is composed of 45 different subunits.

It localises to the mitochondrion inner membrane. It carries out the reaction a ubiquinone + NADH + 5 H(+)(in) = a ubiquinol + NAD(+) + 4 H(+)(out). Core subunit of the mitochondrial membrane respiratory chain NADH dehydrogenase (Complex I) which catalyzes electron transfer from NADH through the respiratory chain, using ubiquinone as an electron acceptor. Essential for the catalytic activity and assembly of complex I. In Rhinoceros unicornis (Greater Indian rhinoceros), this protein is NADH-ubiquinone oxidoreductase chain 5 (MT-ND5).